A 236-amino-acid chain; its full sequence is Ubiquinone biosynthesis O-methyltransferase (236 aa).

Residues R36, G56, D77, and M125 each coordinate S-adenosyl-L-methionine.

The protein belongs to the methyltransferase superfamily. UbiG/COQ3 family.

The enzyme catalyses a 3-demethylubiquinol + S-adenosyl-L-methionine = a ubiquinol + S-adenosyl-L-homocysteine + H(+). It carries out the reaction a 3-(all-trans-polyprenyl)benzene-1,2-diol + S-adenosyl-L-methionine = a 2-methoxy-6-(all-trans-polyprenyl)phenol + S-adenosyl-L-homocysteine + H(+). Its pathway is cofactor biosynthesis; ubiquinone biosynthesis. In terms of biological role, O-methyltransferase that catalyzes the 2 O-methylation steps in the ubiquinone biosynthetic pathway. In Glaesserella parasuis serovar 5 (strain SH0165) (Haemophilus parasuis), this protein is Ubiquinone biosynthesis O-methyltransferase.